Reading from the N-terminus, the 460-residue chain is Elongation factor 1-alpha-B (460 aa).

Gly-2 carries the post-translational modification N,N,N-trimethylglycine. Lys-3 bears the N6,N6-dimethyllysine; alternate mark. At Lys-3 the chain carries N6-methyllysine; alternate. In terms of domain architecture, tr-type G spans 5–240 (KGHINVVVIG…DSIEPPARPT (236 aa)). The G1 stretch occupies residues 14 to 21 (GHVDSGKS). 14-21 (GHVDSGKS) serves as a coordination point for GTP. N6-methyllysine is present on Lys-30. Residues 70-74 (GITID) form a G2 region. Residue Lys-79 is modified to N6,N6,N6-trimethyllysine. A G3 region spans residues 91-94 (DAPG). Residues 91–95 (DAPGH) and 153–156 (NKMD) each bind GTP. Residues 153–156 (NKMD) form a G4 region. The G5 stretch occupies residues 192-194 (SGF). Lys-316 is modified (N6,N6-dimethyllysine; alternate). The residue at position 316 (Lys-316) is an N6-methyllysine; alternate. Lys-390 is subject to N6-methyllysine.

This sequence belongs to the TRAFAC class translation factor GTPase superfamily. Classic translation factor GTPase family. EF-Tu/EF-1A subfamily.

It localises to the cytoplasm. This protein promotes the GTP-dependent binding of aminoacyl-tRNA to the A-site of ribosomes during protein biosynthesis. In Schizosaccharomyces pombe (strain 972 / ATCC 24843) (Fission yeast), this protein is Elongation factor 1-alpha-B (tef102).